A 472-amino-acid polypeptide reads, in one-letter code: Adenosylhomocysteinase (472 aa).

The substrate site is built by Thr-62, Asp-137, and Glu-197. Residue 198–200 (TTT) participates in NAD(+) binding. Substrate is bound by residues Lys-227 and Asp-231. Residues Asn-232, 261 to 266 (GYGDVG), Glu-284, Asn-319, 340 to 342 (IGH), and Asn-385 contribute to the NAD(+) site.

Belongs to the adenosylhomocysteinase family. NAD(+) is required as a cofactor.

The protein resides in the cytoplasm. The catalysed reaction is S-adenosyl-L-homocysteine + H2O = L-homocysteine + adenosine. Its pathway is amino-acid biosynthesis; L-homocysteine biosynthesis; L-homocysteine from S-adenosyl-L-homocysteine: step 1/1. May play a key role in the regulation of the intracellular concentration of adenosylhomocysteine. In Bordetella pertussis (strain Tohama I / ATCC BAA-589 / NCTC 13251), this protein is Adenosylhomocysteinase.